A 119-amino-acid polypeptide reads, in one-letter code: Putative phosphoethanolamine transferase YjgX (119 aa).

Transmembrane regions (helical) follow at residues 5-25 (VFPVYHFLVSAAILVFVVIFW) and 94-114 (LLLSLVRVCAGIICQCMTIPY).

This sequence belongs to the phosphoethanolamine transferase family.

It localises to the cell inner membrane. The polypeptide is Putative phosphoethanolamine transferase YjgX (yjgX) (Escherichia coli (strain K12)).